Reading from the N-terminus, the 1312-residue chain is DNA repair protein RAD50 (1312 aa).

Positions 13, 38, 39, 41, 42, 43, 44, 67, 69, and 159 each coordinate ATP. Mg(2+) is bound at residue Thr43. Gln159 contacts Mg(2+). Coiled coils occupy residues 228–359 (TSKE…QADR), 401–598 (RERQ…AKLN), and 635–673 (SQDFESDLDRLKEEIEKSSKQRAMLAGATAVYSQFITQL). The residue at position 635 (Ser635) is a Phosphoserine; by ATM. Positions 635–734 (SQDFESDLDR…RRDEMLGLVP (100 aa)) constitute a Zinc-hook domain. Zn(2+)-binding residues include Cys681 and Cys684. Thr690 carries the post-translational modification Phosphothreonine. Coiled-coil stretches lie at residues 706–734 (RLAPDKLKSTESELKKKEKRRDEMLGLVP) and 789–1079 (LTDV…GRQK). Lys959 carries the post-translational modification N6-acetyllysine.

It belongs to the SMC family. RAD50 subfamily. As to quaternary structure, component of the MRN complex composed of two heterodimers RAD50 and MRE11 associated with a single NBN. The MRN complexes dimerize on DNA to form joined MRN-MRN oligomers required for DNA double-strand break repair. As part of the MRN complex, interacts with MCM8 and MCM9; the interaction recruits the complex to DNA repair sites. Component of the BASC complex, at least composed of BRCA1, MSH2, MSH6, MLH1, ATM, BLM, RAD50, MRE11 and NBN. Found in a complex with TERF2. Interacts with RINT1. Interacts with BRCA1 via its N-terminal domain. Interacts with DCLRE1C/Artemis. Interacts with MRNIP. Interacts with CYREN (via XLF motif). Interacts with C1QBP and MRE11; interaction takes place in absence of DNA damage to form the MRC (MRE11-RAD50-C1QBP) complex that inhibits the activity of MRE11. (Microbial infection) Interacts with herpes simplex virus 1 protein UL12. It depends on Zn(2+) as a cofactor. Post-translationally, phosphorylation at Ser-635 by ATM in response to DNA damage is required for double-strand break (DSB) repair. As to expression, expressed at very low level in most tissues, except in testis where it is expressed at higher level. Expressed in fibroblasts.

The protein localises to the nucleus. It localises to the chromosome. Its subcellular location is the telomere. It catalyses the reaction ATP + H2O = ADP + phosphate + H(+). In terms of biological role, component of the MRN complex, which plays a central role in double-strand break (DSB) repair, DNA recombination, maintenance of telomere integrity and meiosis. The MRN complex is involved in the repair of DNA double-strand breaks (DSBs) via homologous recombination (HR), an error-free mechanism which primarily occurs during S and G2 phases. The complex (1) mediates the end resection of damaged DNA, which generates proper single-stranded DNA, a key initial steps in HR, and is (2) required for the recruitment of other repair factors and efficient activation of ATM and ATR upon DNA damage. The MRN complex possesses single-strand endonuclease activity and double-strand-specific 3'-5' exonuclease activity, which are provided by MRE11, to initiate end resection, which is required for single-strand invasion and recombination. Within the complex, RAD50 is both required to bind DNA ends and hold them in close proximity and regulate the activity of MRE11. RAD50 provides an ATP-dependent control of MRE11 by positioning DNA ends into the MRE11 active site: ATP-binding induces a large structural change from an open form with accessible MRE11 nuclease sites into a closed form. The MRN complex is also required for DNA damage signaling via activation of the ATM and ATR kinases: the nuclease activity of MRE11 is not required to activate ATM and ATR. The MRN complex is also required for the processing of R-loops. In telomeres the MRN complex may modulate t-loop formation. The polypeptide is DNA repair protein RAD50 (Homo sapiens (Human)).